Here is a 380-residue protein sequence, read N- to C-terminus: Cytochrome b (380 aa).

The next 4 membrane-spanning stretches (helical) occupy residues 34–54, 78–99, 114–134, and 179–199; these read FGSL…LLAM, WLIR…YLHI, WNTG…GYVL, and FFAL…IHLT. Residues H84 and H98 each contribute to the heme b site. Heme b is bound by residues H183 and H197. H202 lines the a ubiquinone pocket. 4 consecutive transmembrane segments (helical) span residues 227–247, 289–309, 321–341, and 348–368; these read LKDI…ALFS, LGGV…PFLH, LSQL…WVGS, and FIII…ILFP.

The protein belongs to the cytochrome b family. As to quaternary structure, the cytochrome bc1 complex contains 11 subunits: 3 respiratory subunits (MT-CYB, CYC1 and UQCRFS1), 2 core proteins (UQCRC1 and UQCRC2) and 6 low-molecular weight proteins (UQCRH/QCR6, UQCRB/QCR7, UQCRQ/QCR8, UQCR10/QCR9, UQCR11/QCR10 and a cleavage product of UQCRFS1). This cytochrome bc1 complex then forms a dimer. The cofactor is heme b.

Its subcellular location is the mitochondrion inner membrane. Functionally, component of the ubiquinol-cytochrome c reductase complex (complex III or cytochrome b-c1 complex) that is part of the mitochondrial respiratory chain. The b-c1 complex mediates electron transfer from ubiquinol to cytochrome c. Contributes to the generation of a proton gradient across the mitochondrial membrane that is then used for ATP synthesis. This is Cytochrome b (MT-CYB) from Thalassoica antarctica (Antarctic petrel).